Consider the following 145-residue polypeptide: Flagellar assembly factor FliW (145 aa).

The protein belongs to the FliW family. As to quaternary structure, interacts with translational regulator CsrA and flagellin(s).

Its subcellular location is the cytoplasm. Acts as an anti-CsrA protein, binds CsrA and prevents it from repressing translation of its target genes, one of which is flagellin. Binds to flagellin and participates in the assembly of the flagellum. The sequence is that of Flagellar assembly factor FliW from Exiguobacterium sp. (strain ATCC BAA-1283 / AT1b).